We begin with the raw amino-acid sequence, 642 residues long: Myrosinase-binding protein 2 (642 aa).

4 consecutive Jacalin-type lectin domains span residues 2–151, 156–291, 334–477, and 490–633; these read SEKV…HFFA, LKHF…HFAP, PNKV…YFAP, and SKKL…HAVP. Residues 296–334 are compositionally biased toward pro residues; that stretch reads TPAPAPAPAPAPAPAPSPAPASAPVPAPAPTPAPAPAPP. Disordered stretches follow at residues 296–338 and 479–499; these read TPAP…NKVE and TNSTTPSTPSTSKKLQARGGN. Residues 479-490 show a composition bias toward low complexity; it reads TNSTTPSTPSTS.

Belongs to the jacalin lectin family. In terms of tissue distribution, expressed in flowers. Detected mainly in ovules and styles of immature flowers, but also in pistils, styles, stamens, petals and embryos. Not detected in leaves.

The sequence is that of Myrosinase-binding protein 2 (F-ATMBP) from Arabidopsis thaliana (Mouse-ear cress).